The following is a 360-amino-acid chain: Heat-inducible transcription repressor HrcA (360 aa).

The protein belongs to the HrcA family.

Its function is as follows. Negative regulator of class I heat shock genes (grpE-dnaK-dnaJ and groELS operons). Prevents heat-shock induction of these operons. The chain is Heat-inducible transcription repressor HrcA from Gloeobacter violaceus (strain ATCC 29082 / PCC 7421).